Consider the following 85-residue polypeptide: MGCCGCGGCGGCGGGCGGGCGSCTTCRCYRVGCCSSCCPCCRGCCGGCCSTPVICCCRRTCCSCGCGCGKGCCQQKGCCQKQCCC.

The 10 X 2 AA repeats of CG stretch occupies residues 4–69; that stretch reads CGCGGCGGCG…TCCSCGCGCG (66 aa).

Belongs to the KRTAP type 28 family.

In the hair cortex, hair keratin intermediate filaments are embedded in an interfilamentous matrix, consisting of hair keratin-associated proteins (KRTAP), which are essential for the formation of a rigid and resistant hair shaft through their extensive disulfide bond cross-linking with abundant cysteine residues of hair keratins. The matrix proteins include the high-sulfur and high-glycine-tyrosine keratins. This chain is Small cysteine and glycine repeat-containing protein 5, found in Homo sapiens (Human).